Reading from the N-terminus, the 86-residue chain is Anti-adapter protein IraP (86 aa).

Positions 1-36 form a coiled coil; it reads MKNLIAELLFKLAQKEEESKELCAQVEALEIIVTAM.

The protein belongs to the IraP family. Interacts with RssB.

It localises to the cytoplasm. Inhibits RpoS proteolysis by regulating RssB activity, thereby increasing the stability of the sigma stress factor RpoS especially during phosphate starvation, but also in stationary phase and during nitrogen starvation. Its effect on RpoS stability is due to its interaction with RssB, which probably blocks the interaction of RssB with RpoS, and the consequent delivery of the RssB-RpoS complex to the ClpXP protein degradation pathway. This Shigella sonnei (strain Ss046) protein is Anti-adapter protein IraP.